The sequence spans 299 residues: Ribosomal protein L11 methyltransferase (299 aa).

S-adenosyl-L-methionine is bound by residues T144, G165, D187, and N229.

The protein belongs to the methyltransferase superfamily. PrmA family.

Its subcellular location is the cytoplasm. The catalysed reaction is L-lysyl-[protein] + 3 S-adenosyl-L-methionine = N(6),N(6),N(6)-trimethyl-L-lysyl-[protein] + 3 S-adenosyl-L-homocysteine + 3 H(+). Functionally, methylates ribosomal protein L11. This Teredinibacter turnerae (strain ATCC 39867 / T7901) protein is Ribosomal protein L11 methyltransferase.